Reading from the N-terminus, the 387-residue chain is 3-ketoacyl-CoA thiolase FadA (387 aa).

Catalysis depends on cysteine 91, which acts as the Acyl-thioester intermediate. Active-site proton acceptor residues include histidine 343 and cysteine 373.

This sequence belongs to the thiolase-like superfamily. Thiolase family. Heterotetramer of two alpha chains (FadB) and two beta chains (FadA).

Its subcellular location is the cytoplasm. The enzyme catalyses an acyl-CoA + acetyl-CoA = a 3-oxoacyl-CoA + CoA. It participates in lipid metabolism; fatty acid beta-oxidation. Its function is as follows. Catalyzes the final step of fatty acid oxidation in which acetyl-CoA is released and the CoA ester of a fatty acid two carbons shorter is formed. Involved in the aerobic and anaerobic degradation of long-chain fatty acids. In Escherichia coli (strain K12), this protein is 3-ketoacyl-CoA thiolase FadA (fadA).